The primary structure comprises 225 residues: Pyridoxine/pyridoxamine 5'-phosphate oxidase (225 aa).

Residues 9–12 (RVDY) and K78 each bind substrate. FMN is bound by residues 73–78 (RTVLCK), 88–89 (YT), K95, and Q117. 3 residues coordinate substrate: Y135, R139, and S143. Residues 152–153 (QS) and W198 each bind FMN. A substrate-binding site is contributed by 204 to 206 (RLH). R208 is a binding site for FMN.

It belongs to the pyridoxamine 5'-phosphate oxidase family. Homodimer. Requires FMN as cofactor.

The catalysed reaction is pyridoxamine 5'-phosphate + O2 + H2O = pyridoxal 5'-phosphate + H2O2 + NH4(+). The enzyme catalyses pyridoxine 5'-phosphate + O2 = pyridoxal 5'-phosphate + H2O2. It participates in cofactor metabolism; pyridoxal 5'-phosphate salvage; pyridoxal 5'-phosphate from pyridoxamine 5'-phosphate: step 1/1. Its pathway is cofactor metabolism; pyridoxal 5'-phosphate salvage; pyridoxal 5'-phosphate from pyridoxine 5'-phosphate: step 1/1. In terms of biological role, catalyzes the oxidation of either pyridoxine 5'-phosphate (PNP) or pyridoxamine 5'-phosphate (PMP) into pyridoxal 5'-phosphate (PLP). In Nocardia farcinica (strain IFM 10152), this protein is Pyridoxine/pyridoxamine 5'-phosphate oxidase.